Reading from the N-terminus, the 852-residue chain is GPI ethanolamine phosphate transferase 2 (852 aa).

N-linked (GlcNAc...) asparagine glycosylation is found at N191 and N420. The next 3 membrane-spanning stretches (helical) occupy residues 458 to 478, 486 to 506, and 516 to 536; these read LIRL…TFFP, FAPA…MMFA, and FWYW…AGHF. N576 carries an N-linked (GlcNAc...) asparagine glycan. 6 helical membrane passes run 632–652, 676–696, 714–734, 750–770, 787–807, and 824–844; these read LLYH…YSLY, TLTL…FLVF, TITS…SNAI, SVFI…IWWV, AHVT…MAAC, and YLYT…LGEI.

The protein belongs to the PIGG/PIGN/PIGO family. PIGG subfamily.

The protein resides in the endoplasmic reticulum membrane. Its pathway is glycolipid biosynthesis; glycosylphosphatidylinositol-anchor biosynthesis. Its function is as follows. Ethanolamine phosphate transferase involved in glycosylphosphatidylinositol-anchor biosynthesis. Transfers ethanolamine phosphate to the GPI second mannose. This Aspergillus oryzae (strain ATCC 42149 / RIB 40) (Yellow koji mold) protein is GPI ethanolamine phosphate transferase 2 (las21).